Here is a 415-residue protein sequence, read N- to C-terminus: Arrestin domain-containing protein 4 (415 aa).

Short sequence motifs (PPxY motif) lie at residues 347–350 (PPNY) and 392–395 (PPLY).

This sequence belongs to the arrestin family. In terms of assembly, interacts with ADRB2. Interacts (via PPxY motifs) with ITCH, NEDD4L and WWP2. Interacts with AVPR2. Identified in a complex containing at least ARRDC4, AVPR2 and HGS. Interacts with SLC11A2; controls the incorporation of SLC11A2 into extracellular vesicles through an ubiquitination-dependent mechanism. Interacts with TRIM65.

It is found in the early endosome. The protein resides in the cell membrane. It localises to the cytoplasmic vesicle. Functions as an adapter recruiting ubiquitin-protein ligases to their specific substrates. Plays a role in endocytosis of activated G protein-coupled receptors (GPCRs). Through an ubiquitination-dependent mechanism also plays a role in the incorporation of SLC11A2 into extracellular vesicles. May play a role in glucose uptake. Participates in innate immune response by promoting IFIH1/MDA5 activation through interaction with TRIM65. The protein is Arrestin domain-containing protein 4 of Mus musculus (Mouse).